Consider the following 147-residue polypeptide: Arginine repressor (147 aa).

This sequence belongs to the ArgR family.

The protein localises to the cytoplasm. Its pathway is amino-acid biosynthesis; L-arginine biosynthesis [regulation]. In terms of biological role, regulates arginine biosynthesis genes. The polypeptide is Arginine repressor (Chlamydia caviae (strain ATCC VR-813 / DSM 19441 / 03DC25 / GPIC) (Chlamydophila caviae)).